Here is a 397-residue protein sequence, read N- to C-terminus: uncharacterized protein (397 aa).

This is an uncharacterized protein from Nostoc sp. (strain PCC 7120 / SAG 25.82 / UTEX 2576).